The primary structure comprises 348 residues: Protein-glutamate methylesterase/protein-glutamine glutaminase 5 (348 aa).

The Response regulatory domain occupies 8 to 125 (RVLVVDDSAF…TERLYELGGE (118 aa)). At Asp59 the chain carries 4-aspartylphosphate. The region spanning 157-348 (RAAAKSLVVV…MLALLRRHVR (192 aa)) is the CheB-type methylesterase domain. Active-site residues include Ser169, His196, and Asp292.

It belongs to the CheB family. In terms of processing, phosphorylated by CheA. Phosphorylation of the N-terminal regulatory domain activates the methylesterase activity.

It is found in the cytoplasm. The catalysed reaction is [protein]-L-glutamate 5-O-methyl ester + H2O = L-glutamyl-[protein] + methanol + H(+). It carries out the reaction L-glutaminyl-[protein] + H2O = L-glutamyl-[protein] + NH4(+). Involved in chemotaxis. Part of a chemotaxis signal transduction system that modulates chemotaxis in response to various stimuli. Catalyzes the demethylation of specific methylglutamate residues introduced into the chemoreceptors (methyl-accepting chemotaxis proteins or MCP) by CheR. Also mediates the irreversible deamidation of specific glutamine residues to glutamic acid. The protein is Protein-glutamate methylesterase/protein-glutamine glutaminase 5 of Myxococcus xanthus (strain DK1622).